The chain runs to 437 residues: Adenylosuccinate synthetase (437 aa).

Residues 25–31 (GDEGKGK), 53–55 (GHT), and lysine 62 contribute to the GTP site. The active-site Proton acceptor is the aspartate 26. Positions 26 and 53 each coordinate Mg(2+). IMP contacts are provided by residues 26-29 (DEGK) and 51-54 (NAGH). Histidine 54 functions as the Proton donor in the catalytic mechanism. Threonine 141, arginine 155, asparagine 232, and threonine 247 together coordinate IMP. Threonine 307 serves as a coordination point for GTP. 307 to 313 (TTTKRPR) is a binding site for substrate. Residue arginine 311 coordinates IMP. GTP-binding positions include arginine 313, 339 to 341 (KLD), and 425 to 427 (GVG).

It belongs to the adenylosuccinate synthetase family. Homodimer. It depends on Mg(2+) as a cofactor.

The protein resides in the cytoplasm. The enzyme catalyses IMP + L-aspartate + GTP = N(6)-(1,2-dicarboxyethyl)-AMP + GDP + phosphate + 2 H(+). It functions in the pathway purine metabolism; AMP biosynthesis via de novo pathway; AMP from IMP: step 1/2. In terms of biological role, plays an important role in the salvage pathway for purine nucleotide biosynthesis. Catalyzes the first committed step in the biosynthesis of AMP from IMP. The chain is Adenylosuccinate synthetase from Plasmodium knowlesi (strain H).